The primary structure comprises 329 residues: NADH-quinone oxidoreductase subunit H (329 aa).

A run of 9 helical transmembrane segments spans residues 9–29, 42–62, 75–95, 117–137, 154–174, 188–208, 238–258, 269–291, and 309–329; these read LIKILILVAVFSALGGFATYI, GPCYVGPFGLLQVAADGIKLF, FIFTLAPIIAMVSAFVSMAPI, IGFLFFLAVGAAGIYAPILAG, IQLLSFEVVSTLTILAPLMVV, GGFLDWLVFKQPLAFVLFLIA, LKWGMFFLAEYAHLFAFSFVI, WGFIPGGIAILIKAGFFVFLSMW, and WKIMLPLALLNIVLTGIIILI.

It belongs to the complex I subunit 1 family. NDH-1 is composed of 14 different subunits. Subunits NuoA, H, J, K, L, M, N constitute the membrane sector of the complex.

It localises to the cell inner membrane. The enzyme catalyses a quinone + NADH + 5 H(+)(in) = a quinol + NAD(+) + 4 H(+)(out). In terms of biological role, NDH-1 shuttles electrons from NADH, via FMN and iron-sulfur (Fe-S) centers, to quinones in the respiratory chain. The immediate electron acceptor for the enzyme in this species is believed to be ubiquinone. Couples the redox reaction to proton translocation (for every two electrons transferred, four hydrogen ions are translocated across the cytoplasmic membrane), and thus conserves the redox energy in a proton gradient. This subunit may bind ubiquinone. The protein is NADH-quinone oxidoreductase subunit H of Helicobacter pylori (strain Shi470).